We begin with the raw amino-acid sequence, 166 residues long: Interferon gamma (166 aa).

The N-terminal stretch at 1 to 23 (MNYTSYILAFQLCVILCSSGCNC) is a signal peptide. Gln-24 bears the Pyrrolidone carboxylic acid mark. N-linked (GlcNAc...) asparagine glycans are attached at residues Asn-39 and Asn-106.

It belongs to the type II (or gamma) interferon family. Homodimer. Interacts with IFNGR1 (via extracellular domain); this interaction promotes IFNGR1 dimerization. In terms of tissue distribution, released primarily from activated T lymphocytes.

Its subcellular location is the secreted. Type II interferon produced by immune cells such as T-cells and NK cells that plays crucial roles in antimicrobial, antiviral, and antitumor responses by activating effector immune cells and enhancing antigen presentation. Primarily signals through the JAK-STAT pathway after interaction with its receptor IFNGR1 to affect gene regulation. Upon IFNG binding, IFNGR1 intracellular domain opens out to allow association of downstream signaling components JAK2, JAK1 and STAT1, leading to STAT1 activation, nuclear translocation and transcription of IFNG-regulated genes. Many of the induced genes are transcription factors such as IRF1 that are able to further drive regulation of a next wave of transcription. Plays a role in class I antigen presentation pathway by inducing a replacement of catalytic proteasome subunits with immunoproteasome subunits. In turn, increases the quantity, quality, and repertoire of peptides for class I MHC loading. Increases the efficiency of peptide generation also by inducing the expression of activator PA28 that associates with the proteasome and alters its proteolytic cleavage preference. Up-regulates as well MHC II complexes on the cell surface by promoting expression of several key molecules such as cathepsins B/CTSB, H/CTSH, and L/CTSL. Participates in the regulation of hematopoietic stem cells during development and under homeostatic conditions by affecting their development, quiescence, and differentiation. This chain is Interferon gamma (IFNG), found in Canis lupus familiaris (Dog).